The sequence spans 280 residues: 2-dehydro-3-deoxyphosphooctonate aldolase (280 aa).

Belongs to the KdsA family.

Its subcellular location is the cytoplasm. The catalysed reaction is D-arabinose 5-phosphate + phosphoenolpyruvate + H2O = 3-deoxy-alpha-D-manno-2-octulosonate-8-phosphate + phosphate. Its pathway is carbohydrate biosynthesis; 3-deoxy-D-manno-octulosonate biosynthesis; 3-deoxy-D-manno-octulosonate from D-ribulose 5-phosphate: step 2/3. The protein operates within bacterial outer membrane biogenesis; lipopolysaccharide biosynthesis. This Neisseria meningitidis serogroup B (strain ATCC BAA-335 / MC58) protein is 2-dehydro-3-deoxyphosphooctonate aldolase.